An 89-amino-acid chain; its full sequence is Small ribosomal subunit protein bS20 (89 aa).

The segment at 68–89 (PNKGARKSSRLDHFVNEQKSKQ) is disordered. Positions 76 to 89 (SRLDHFVNEQKSKQ) are enriched in basic and acidic residues.

It belongs to the bacterial ribosomal protein bS20 family.

In terms of biological role, binds directly to 16S ribosomal RNA. The chain is Small ribosomal subunit protein bS20 from Mycoplasmopsis agalactiae (strain NCTC 10123 / CIP 59.7 / PG2) (Mycoplasma agalactiae).